A 141-amino-acid chain; its full sequence is Transcription antitermination protein NusB (141 aa).

It belongs to the NusB family.

Functionally, involved in transcription antitermination. Required for transcription of ribosomal RNA (rRNA) genes. Binds specifically to the boxA antiterminator sequence of the ribosomal RNA (rrn) operons. This chain is Transcription antitermination protein NusB, found in Treponema pallidum (strain Nichols).